The chain runs to 847 residues: MHLLGPWLLLLVLEYLAFSDSSKWAFEHPETLYAWEGACVWIPCTYRALDRDLESFILFHNPEYNKNTSKFDGTRLYESTKDGKVPSEQKRVQFLGDKNKNCTLSIHPVHVNDSGQLGLRMESKTAKWMERIHLNVSERPFPPHIQLPPEIQESQEVTLTCLLNFSCYGYPIQLQWLLEGVPMRQAAVTSTSLTIKSVFTRSELKFSPQWSHHGKIVTCQLQDADGKFLSNDTVQLNVKHTPKLEIKVTPSDAIVREGESVTMTCEVSSSNPEYTTISWLKDGTSLKKQNTLMLNLHEVTKDQSGKYCCQVSNDVGPGRSAEVFLQVQYAPEPSTVQILHSPAVEGSQVEFLCMSLANPLPTNYTWYHNGKEMQGRTEEKVHIPKILPWHAGTYSCVAENILGTGQRGPGAELDVQYPPKKVTTVIQNPTPIREGDTVTLSCNYNSSNPSVTRYEWKPHGAWEEPSLGVLKIQNVGWGNTTIACAACNSWCSWASPVALNVQYAPRDVRVRKIKPLSEIHSGNSVSLQCDFSSSHPKEVQFFWEKNGRLLGKESRLNFDSISPEDAGSYSCWVNNSIGQTASKAWTLEVLYAPRRLRVSMSPGDQVMEGKSATLTCESDANPPVSHYTWFDWNNQSLPYHSQKLRLEPVKVQHSGAYWCQGTNSVGKGHSPLSTLTVYYSPETIGRRVAVGFGSCLAILILAICGLKLQRRWKRTQSQQGLQENSSGQSFFVRNKKVRRAPLSEGPHSLGCYNPMMEDGISYTTLRFPETNIPRTGDAETSEMQSPPPDCDDTVTYSVLHKRQMGDYENVIPDFSEDEGIHYSELIQFGVGERPQAQENVDYVILKH.

A signal peptide spans 1 to 19 (MHLLGPWLLLLVLEYLAFS). The 119-residue stretch at 20-138 (DSSKWAFEHP…MERIHLNVSE (119 aa)) folds into the Ig-like V-type domain. At 20–687 (DSSKWAFEHP…YYSPETIGRR (668 aa)) the chain is on the extracellular side. Residues N67, N101, and N112 are each glycosylated (N-linked (GlcNAc...) asparagine). Residue R120 coordinates N-acetylneuraminate. N-linked (GlcNAc...) asparagine glycosylation is found at N135, N164, and N231. Ig-like C2-type domains lie at 143–235 (PHIQ…DTVQ), 242–326 (PKLE…VFLQ), 331–416 (PEPS…LDVQ), 419–500 (PKKV…VALN), 505–582 (PRDV…QTAS), and 593–676 (PRRL…STLT). A disulfide bond links C161 and C219. Cystine bridges form between C265–C309 and C353–C396. 5 N-linked (GlcNAc...) asparagine glycosylation sites follow: N363, N428, N445, N448, and N479. Cystine bridges form between C442-C484 and C529-C571. Residues N574 and N634 are each glycosylated (N-linked (GlcNAc...) asparagine). C616 and C659 are joined by a disulfide. Residues 688–708 (VAVGFGSCLAILILAICGLKL) traverse the membrane as a helical segment. Residues 709 to 847 (QRRWKRTQSQ…ENVDYVILKH (139 aa)) are Cytoplasmic-facing. 3 positions are modified to phosphoserine: S725, S726, and S729. 2 short sequence motifs (ITIM motif) span residues 760–765 (ISYTTL) and 794–799 (VTYSVL). Residue Y762 is modified to Phosphotyrosine. 3 positions are modified to phosphotyrosine: Y807, Y822, and Y842. Short sequence motifs (ITIM motif) lie at residues 820–825 (IHYSEL) and 840–845 (VDYVIL).

It belongs to the immunoglobulin superfamily. SIGLEC (sialic acid binding Ig-like lectin) family. Predominantly monomer of isoform CD22-beta. Also found as heterodimer of isoform CD22-beta and a shorter isoform. Interacts with PTPN6/SHP-1, LYN, SYK, PIK3R1/PIK3R2 and PLCG1 upon phosphorylation. Interacts with GRB2, INPP5D and SHC1 upon phosphorylation. May form a complex with INPP5D/SHIP, GRB2 and SHC1. Phosphorylation of Tyr-762, Tyr-807 and Tyr-822 are involved in binding to SYK, GRB2 and SYK, respectively. Phosphorylation of Tyr-842 is involved in binding to SYK, PLCG2 and PIK3R1/PIK3R2. Post-translationally, phosphorylated on tyrosine residues by LYN.

It is found in the cell membrane. Its function is as follows. Most highly expressed siglec (sialic acid-binding immunoglobulin-like lectin) on B-cells that plays a role in various aspects of B-cell biology including differentiation, antigen presentation, and trafficking to bone marrow. Binds to alpha 2,6-linked sialic acid residues of surface molecules such as CD22 itself, CD45 and IgM in a cis configuration. Can also bind to ligands on other cells as an adhesion molecule in a trans configuration. Acts as an inhibitory coreceptor on the surface of B-cells and inhibits B-cell receptor induced signaling, characterized by inhibition of the calcium mobilization and cellular activation. Mechanistically, the immunoreceptor tyrosine-based inhibitory motif domain is phosphorylated by the Src kinase LYN, which in turn leads to the recruitment of the protein tyrosine phosphatase 1/PTPN6, leading to the negative regulation of BCR signaling. If this negative signaling from is of sufficient strength, apoptosis of the B-cell can be induced. This Pan paniscus (Pygmy chimpanzee) protein is B-cell receptor CD22.